The following is a 268-amino-acid chain: L-aspartate dehydrogenase (268 aa).

NAD(+) is bound by residues Ala-125 and Asn-191. His-221 is an active-site residue.

It belongs to the L-aspartate dehydrogenase family.

It carries out the reaction L-aspartate + NADP(+) + H2O = oxaloacetate + NH4(+) + NADPH + H(+). The enzyme catalyses L-aspartate + NAD(+) + H2O = oxaloacetate + NH4(+) + NADH + H(+). It participates in cofactor biosynthesis; NAD(+) biosynthesis; iminoaspartate from L-aspartate (dehydrogenase route): step 1/1. In terms of biological role, specifically catalyzes the NAD or NADP-dependent dehydrogenation of L-aspartate to iminoaspartate. The polypeptide is L-aspartate dehydrogenase (Brucella anthropi (strain ATCC 49188 / DSM 6882 / CCUG 24695 / JCM 21032 / LMG 3331 / NBRC 15819 / NCTC 12168 / Alc 37) (Ochrobactrum anthropi)).